The chain runs to 325 residues: Fe-S cluster assembly protein DRE2 (325 aa).

Positions 1–169 are N-terminal SAM-like domain; the sequence is MTLGDRLGLI…KKKDAGNNEQ (169 aa). The linker stretch occupies residues 170–222; that stretch reads VVKLSVEDVEDDLDDDPEVSNELLSKAKFFNSLSLNQDAEIDENNLIKSTDGD. Cys229, Cys240, Cys243, and Cys245 together coordinate [2Fe-2S] cluster. The segment at 229–245 is fe-S binding site A; that stretch reads CGKTNTKKRRACKDCTC. Positions 288, 291, 299, and 302 each coordinate [4Fe-4S] cluster. 2 consecutive short sequence motifs (cx2C motif) follow at residues 288–291 and 299–302; these read CGSC and CSGC. The interval 288–302 is fe-S binding site B; sequence CGSCSLGDAFRCSGC.

Belongs to the anamorsin family. Monomer. Interacts with TAH18. Interacts with MIA40. The cofactor is [2Fe-2S] cluster. [4Fe-4S] cluster is required as a cofactor.

It localises to the cytoplasm. Its subcellular location is the mitochondrion intermembrane space. Its function is as follows. Component of the cytosolic iron-sulfur (Fe-S) protein assembly (CIA) machinery required for the maturation of extramitochondrial Fe-S proteins. Part of an electron transfer chain functioning in an early step of cytosolic Fe-S biogenesis, facilitating the de novo assembly of a [4Fe-4S] cluster on the scaffold complex CFD1-NBP35. Electrons are transferred to DRE2 from NADPH via the FAD- and FMN-containing protein TAH18. TAH18-DRE2 are also required for the assembly of the diferric tyrosyl radical cofactor of ribonucleotide reductase (RNR), probably by providing electrons for reduction during radical cofactor maturation in the catalytic small subunit RNR2. In Vanderwaltozyma polyspora (strain ATCC 22028 / DSM 70294 / BCRC 21397 / CBS 2163 / NBRC 10782 / NRRL Y-8283 / UCD 57-17) (Kluyveromyces polysporus), this protein is Fe-S cluster assembly protein DRE2.